Consider the following 111-residue polypeptide: uncharacterized protein (111 aa).

Glycine 2 carries the N-myristoyl glycine; by host lipid modification.

This is an uncharacterized protein from Acanthamoeba polyphaga mimivirus (APMV).